The sequence spans 478 residues: Solute carrier family 7 member 13 (478 aa).

The Cytoplasmic portion of the chain corresponds to methionine 1–glutamate 14. The helical transmembrane segment at leucine 15–valine 35 threads the bilayer. Residues serine 36–asparagine 47 are Extracellular-facing. Residues valine 48–cysteine 68 form a helical membrane-spanning segment. The Cytoplasmic portion of the chain corresponds to serine 69–cysteine 89. The helical transmembrane segment at phenylalanine 90–isoleucine 110 threads the bilayer. The Extracellular portion of the chain corresponds to alanine 111–cysteine 129. The helical transmembrane segment at serine 130–leucine 150 threads the bilayer. Residues asparagine 151–threonine 163 are Cytoplasmic-facing. Residues valine 164–leucine 184 traverse the membrane as a helical segment. Residues valine 185–glutamine 208 are Extracellular-facing. A helical transmembrane segment spans residues leucine 209–isoleucine 229. Residues alanine 230–arginine 242 lie on the Cytoplasmic side of the membrane. Residues cysteine 243–leucine 263 traverse the membrane as a helical segment. Topologically, residues threonine 264–glutamine 288 are extracellular. The chain crosses the membrane as a helical span at residues phenylalanine 289–valine 309. At leucine 310–proline 338 the chain is on the cytoplasmic side. A helical membrane pass occupies residues phenylalanine 339–isoleucine 359. Aspartate 360 is a topological domain (extracellular). A helical membrane pass occupies residues leucine 361 to leucine 381. Residues lysine 382–lysine 395 are Cytoplasmic-facing. The helical transmembrane segment at valine 396–leucine 416 threads the bilayer. At valine 417–histidine 423 the chain is on the extracellular side. Residues tyrosine 424 to phenylalanine 444 traverse the membrane as a helical segment. The Cytoplasmic portion of the chain corresponds to lysine 445 to serine 478.

The protein belongs to the amino acid-polyamine-organocation (APC) superfamily. In terms of assembly, disulfide-linked heterodimer composed of the catalytic light subunit SLC7A13 and the heavy subunit SLC3A1. As to expression, expressed in renal tubules in the outer stripe of the outer medulla and medullary ray (at protein level). Detected in male but not in female kidney.

It localises to the apical cell membrane. It catalyses the reaction L-cystine(out) + L-aspartate(in) = L-cystine(in) + L-aspartate(out). The enzyme catalyses L-cystine(out) = L-cystine(in). The catalysed reaction is L-aspartate(in) + L-glutamate(out) = L-aspartate(out) + L-glutamate(in). It carries out the reaction L-aspartate(in) + L-glutamine(out) = L-aspartate(out) + L-glutamine(in). It catalyses the reaction L-aspartate(in) + L-methionine(out) = L-aspartate(out) + L-methionine(in). The enzyme catalyses L-leucine(out) + L-aspartate(in) = L-leucine(in) + L-aspartate(out). The catalysed reaction is L-valine(out) + L-aspartate(in) = L-valine(in) + L-aspartate(out). It carries out the reaction L-aspartate(in) + L-phenylalanine(out) = L-aspartate(out) + L-phenylalanine(in). It catalyses the reaction L-tyrosine(out) + L-aspartate(in) = L-tyrosine(in) + L-aspartate(out). The enzyme catalyses L-tryptophan(out) + L-aspartate(in) = L-tryptophan(in) + L-aspartate(out). In terms of biological role, associates with SLC3A1/rBAT to form a functional heterodimeric complex that transports anionic and neutral amino acids across the apical plasma membrane of renal epithelium. Preferentially mediates exchange transport, but can also operate via facilitated diffusion. May act as a major transporter for L-cystine in late proximal tubules, ensuring its reabsorption from the luminal fluid in exchange for cytosolic L-glutamate or L-aspartate. The chain is Solute carrier family 7 member 13 from Mus musculus (Mouse).